The chain runs to 98 residues: NADH-ubiquinone oxidoreductase chain 4L (98 aa).

3 helical membrane-spanning segments follow: residues 1–21 (MSLT…GLLM), 31–51 (LCLE…VLTI), and 61–81 (IILL…LVVV).

Belongs to the complex I subunit 4L family. As to quaternary structure, core subunit of respiratory chain NADH dehydrogenase (Complex I) which is composed of 45 different subunits.

The protein resides in the mitochondrion inner membrane. The catalysed reaction is a ubiquinone + NADH + 5 H(+)(in) = a ubiquinol + NAD(+) + 4 H(+)(out). In terms of biological role, core subunit of the mitochondrial membrane respiratory chain NADH dehydrogenase (Complex I) which catalyzes electron transfer from NADH through the respiratory chain, using ubiquinone as an electron acceptor. Part of the enzyme membrane arm which is embedded in the lipid bilayer and involved in proton translocation. In Chalinolobus tuberculatus (New Zealand long-tailed bat), this protein is NADH-ubiquinone oxidoreductase chain 4L (MT-ND4L).